The primary structure comprises 490 residues: Solute carrier family 2, facilitated glucose transporter member 1 (490 aa).

Over 1–10 the chain is Cytoplasmic; sequence MESGSKMTAR. A helical membrane pass occupies residues 11–32; it reads LMLAVGGAVLGSLQFGYNTGVI. Residues 33–65 lie on the Extracellular side of the membrane; sequence NRPQKVIEDFYNHTWLYRYEEPISPATLTTLWS. N-linked (GlcNAc...) asparagine glycosylation is present at Asn-44. A helical transmembrane segment spans residues 66–86; that stretch reads LSVAIFSVGGMIGSFSVGLFV. Residues 87–89 are Cytoplasmic-facing; the sequence is NRF. A helical transmembrane segment spans residues 90–111; sequence GRRNSMLMSNILAFLAAVLMGF. The Extracellular portion of the chain corresponds to 112–119; it reads SKMALSFE. The helical transmembrane segment at 120–143 threads the bilayer; it reads MLILGRFIIGLYSGLTTGFVPMYV. At 144-154 the chain is on the cytoplasmic side; it reads GEVSPTALRGA. The chain crosses the membrane as a helical span at residues 155 to 175; the sequence is LGTFHQLGIVLGILIAQVFGL. Gln-160 contributes to the D-glucose binding site. Residues 176–184 lie on the Extracellular side of the membrane; that stretch reads DLIMGNDSL. The chain crosses the membrane as a helical span at residues 185 to 205; that stretch reads WPLLLGFIFVPALLQCIILPF. Topologically, residues 206–270 are cytoplasmic; that stretch reads APESPRFLLI…LFRSPMYRQP (65 aa). A helical membrane pass occupies residues 271-292; sequence ILIAIVLQLSQQLSGINAVFYY. D-glucose is bound by residues 281–282 and Asn-287; that span reads QQ. Over 293 to 305 the chain is Extracellular; the sequence is STSIFEKSGVEQP. A helical membrane pass occupies residues 306 to 327; it reads VYATIGSGVVNTAFTVVSLFVV. Asn-316 contacts D-glucose. Over 328-333 the chain is Cytoplasmic; it reads ERAGRR. The chain crosses the membrane as a helical span at residues 334-354; that stretch reads TLHLIGLAGMAGCAILMTIAL. The Extracellular segment spans residues 355–364; that stretch reads TLLDQMPWMS. A helical membrane pass occupies residues 365-387; that stretch reads YLSIVAIFGFVAFFEIGPGPIPW. Residues Glu-379 and Trp-387 each contribute to the D-glucose site. Over 388–400 the chain is Cytoplasmic; that stretch reads FIVAELFSQGPRP. The chain crosses the membrane as a helical span at residues 401-421; that stretch reads AAFAVAGLSNWTSNFIVGMGF. Residues 422-428 lie on the Extracellular side of the membrane; that stretch reads QYIAQLC. A helical membrane pass occupies residues 429-449; the sequence is GSYVFIIFTVLLVLFFIFTYF. Residues 450-490 are Cytoplasmic-facing; sequence KVPETKGRTFDEIAYRFRQGGASQSDKTPDEFHSLGADSQV. The segment at 470–490 is disordered; that stretch reads GASQSDKTPDEFHSLGADSQV.

It belongs to the major facilitator superfamily. Sugar transporter (TC 2.A.1.1) family. Glucose transporter subfamily. In terms of assembly, interacts with isoform 1 of BSG. In terms of tissue distribution, retinal cones (at protein level).

It localises to the cell membrane. It is found in the photoreceptor inner segment. It catalyses the reaction D-glucose(out) = D-glucose(in). Functionally, facilitative glucose transporter, which is responsible for constitutive or basal glucose uptake. Has a very broad substrate specificity; can transport a wide range of aldoses including both pentoses and hexoses. Most important energy carrier of the brain: present at the blood-brain barrier and assures the energy-independent, facilitative transport of glucose into the brain. In association with BSG and NXNL1, promotes retinal cone survival by increasing glucose uptake into photoreceptors. Required for mesendoderm differentiation. The polypeptide is Solute carrier family 2, facilitated glucose transporter member 1 (Gallus gallus (Chicken)).